A 170-amino-acid chain; its full sequence is Acireductone dioxygenase (170 aa).

Positions 99, 101, 105, and 144 each coordinate Fe(2+). The Ni(2+) site is built by His-99, His-101, Glu-105, and His-144.

This sequence belongs to the acireductone dioxygenase (ARD) family. In terms of assembly, monomer. It depends on Fe(2+) as a cofactor. Ni(2+) serves as cofactor.

The enzyme catalyses 1,2-dihydroxy-5-(methylsulfanyl)pent-1-en-3-one + O2 = 3-(methylsulfanyl)propanoate + CO + formate + 2 H(+). It carries out the reaction 1,2-dihydroxy-5-(methylsulfanyl)pent-1-en-3-one + O2 = 4-methylsulfanyl-2-oxobutanoate + formate + 2 H(+). It participates in amino-acid biosynthesis; L-methionine biosynthesis via salvage pathway; L-methionine from S-methyl-5-thio-alpha-D-ribose 1-phosphate: step 5/6. Functionally, catalyzes 2 different reactions between oxygen and the acireductone 1,2-dihydroxy-3-keto-5-methylthiopentene (DHK-MTPene) depending upon the metal bound in the active site. Fe-containing acireductone dioxygenase (Fe-ARD) produces formate and 2-keto-4-methylthiobutyrate (KMTB), the alpha-ketoacid precursor of methionine in the methionine recycle pathway. Ni-containing acireductone dioxygenase (Ni-ARD) produces methylthiopropionate, carbon monoxide and formate, and does not lie on the methionine recycle pathway. The sequence is that of Acireductone dioxygenase from Bacillus thuringiensis subsp. konkukian (strain 97-27).